The primary structure comprises 264 residues: Putative HTH-type transcriptional regulator TrmBL2 (264 aa).

Residues 33–54 (LTPAELASVSEVPAPRTYDVLR) constitute a DNA-binding region (H-T-H motif).

This sequence belongs to the transcriptional regulator TrmB family.

In terms of biological role, binds to the maltodextrin transport gene cluster (mdxE operon) promoter and to some other TGM (Thermococcales-Glycolytic-Motif) sequences, but not exclusively. The protein is Putative HTH-type transcriptional regulator TrmBL2 (trmBL2) of Pyrococcus furiosus (strain ATCC 43587 / DSM 3638 / JCM 8422 / Vc1).